Reading from the N-terminus, the 138-residue chain is Single-stranded DNA-binding protein 3 (138 aa).

The 104-residue stretch at 1–104 (MINNIVLVGR…VVAENFQLLE (104 aa)) folds into the SSB domain. The span at 105 to 121 (SRNSQQQTNQSGNSSNS) shows a compositional bias: low complexity. The disordered stretch occupies residues 105–138 (SRNSQQQTNQSGNSSNSYFGNANKMDISDDDLPF). The Important for interaction with partner proteins motif lies at 133 to 138 (DDDLPF).

Homotetramer.

Plays an important role in DNA replication, recombination and repair. Binds to ssDNA and to an array of partner proteins to recruit them to their sites of action during DNA metabolism. This is Single-stranded DNA-binding protein 3 (ssb3) from Streptococcus agalactiae serotype V (strain ATCC BAA-611 / 2603 V/R).